A 2530-amino-acid chain; its full sequence is Cullin-9 (2530 aa).

Lys-87 participates in a covalent cross-link: Glycyl lysine isopeptide (Lys-Gly) (interchain with G-Cter in ubiquitin). Positions 367-440 (RSEFSSRSGY…HWHMLEILGP (74 aa)) constitute a CPH domain. Disordered regions lie at residues 585-639 (LPSS…KAQS) and 930-951 (RGSP…GSPE). The segment covering 940 to 949 (TPSTQGQDGS) has biased composition (polar residues). The residue at position 978 (Ser-978) is a Phosphoserine. A DOC domain is found at 1145–1324 (PITIPFFDVF…RTCLFYTIRA (180 aa)). An ATP-binding site is contributed by 1365 to 1372 (AAQALGKT). Disordered stretches follow at residues 1435–1468 (EAPP…TPVC) and 1667–1690 (GDQE…GREL). Ser-1459 bears the Phosphoserine mark. Residue Lys-1884 forms a Glycyl lysine isopeptide (Lys-Gly) (interchain with G-Cter in NEDD8) linkage. The segment at 2070–2287 (RPDQCPVCVT…KDYYNCSAMV (218 aa)) is TRIAD supradomain. Zn(2+)-binding residues include Cys-2074, Cys-2077, Cys-2092, His-2094, Cys-2097, Cys-2100, Cys-2119, Cys-2124, Cys-2164, Cys-2170, Cys-2185, Cys-2188, Cys-2193, Cys-2196, His-2202, Cys-2207, Cys-2240, and Cys-2243. The segment at 2074-2124 (CPVCVTPLGPHDDSPSLCCLHCCCKSCWNEYLTTRIEQNFVLNCTCPIADC) adopts an RING-type 1 zinc-finger fold. The IBR-type zinc-finger motif lies at 2144–2207 (SKYEKALLRG…FPEAHYPASC (64 aa)). The RING-type 2; atypical zinc-finger motif lies at 2240–2269 (CPSCQAPIEKNEGCLHMTCARCNHGFCWRC). Residue Cys-2253 is part of the active site. Positions 2258, 2261, 2266, 2269, 2277, and 2283 each coordinate Zn(2+). Ser-2440 carries the phosphoserine modification. Residues 2443–2530 (VETREVKGSN…DEDEDDESYD (88 aa)) form a disordered region. A compositionally biased stretch (polar residues) spans 2452–2462 (NVPSDQPQGSS). Positions 2459–2500 (QGSSGLEVEDEEEEEEEEEEEEEEEEEDVPEWQHEFDEELDN) form a coiled coil. Acidic residues-rich tracts occupy residues 2465 to 2510 (EVED…EESE) and 2520 to 2530 (GDEDEDDESYD).

Belongs to the cullin family. As to quaternary structure, component of a Cul9-RING complex consisting of CUL9 and RBX1; the CUL9-RBX1 complex is a heterododecamer composed of six CUL9 and six RBX1 protomers. Interacts (via C-terminal TRIAD/RBR supradomain) with E2 ubiquitin-conjugating enzyme UBE2L3. Interacts with CUL7; the interaction with the CUL7 component of the 3M complex leads to inhibition of CUL9 activity. The CUL7-CUL9 heterodimer seems to interact specifically with TP53, likely via the CPH domain. Forms a complex with p53/TP53 in the cytoplasm of unstressed cells. Interacts with UBCH7 and UBCH8. Autoubiquitinated by the CUL9-RBX1 complex at Lys-87. Post-translationally, neddylated. Neddylation is mediated by E1 enzyme UBA3-NAE1 complex and E2 enzyme UBE2F. Structural rearrangment of the C-terminal TRIAD/RBR supradomain may play a role in neddylation and deneddylation.

It is found in the cytoplasm. In terms of biological role, core component of the Cul9-RING ubiquitin-protein ligase complex composed of CUL9 and RBX1. The CUL9-RBX1 complex mediates ubiquitination and subsequent degradation of BIRC5 and is required to maintain microtubule dynamics and genome integrity. Acts downstream of the 3M complex, which inhibits CUL9 activity and the ubiquitination of BIRC5. The CUL9-RBX1 complex also mediates mono-ubiquitination of p53/TP53. Acts as a cytoplasmic anchor protein in p53/TP53-associated protein complex. Regulates the subcellular localization of p53/TP53 and its subsequent function. Ubiquitinates apurinic/apyrimidinic endodeoxyribonuclease APEX2. Ubiquitination by the CUL9-RBX1 complex is predominantly mediated by E2 ubiquitin-conjugating enzymes UBE2L3 and UBE2D2. This is Cullin-9 (Cul9) from Mus musculus (Mouse).